Consider the following 420-residue polypeptide: Dynein axonemal assembly factor 4 (420 aa).

A CS domain is found at 3-87 (LQVSDYSWQQ…KEAAMWETLS (85 aa)). Residues 7 to 103 (DYSWQQTKTA…EMMQRIREKS (97 aa)) form a mediates interaction with ESR1 and STUB1 region. TPR repeat units follow at residues 290–323 (PEWL…NNKM), 324–357 (PLLY…LMPP), and 366–399 (MKAH…DPSN).

As to quaternary structure, interacts with ZMYND10. Interacts with STUB1. Interacts with ESR1 and ESR2. Interacts with DNAAF2. Interacts with CCT3, CCT4, CCT5 and CCT8. Interacts with DNAAF6/PIH1D3.

It localises to the nucleus. The protein localises to the cytoplasm. It is found in the cell projection. Its subcellular location is the neuron projection. The protein resides in the dynein axonemal particle. Functionally, involved in neuronal migration during development of the cerebral neocortex. May regulate the stability and proteasomal degradation of the estrogen receptors that play an important role in neuronal differentiation, survival and plasticity. Axonemal dynein assembly factor required for ciliary motility. The protein is Dynein axonemal assembly factor 4 of Pan paniscus (Pygmy chimpanzee).